Reading from the N-terminus, the 128-residue chain is Cytochrome b (128 aa).

3 helical membrane passes run 25–45 (FGSM…FLAI), 69–90 (WIMQ…YIHI), and 105–125 (WLSG…XMCY). Heme b-binding residues include histidine 75 and histidine 89. Residue histidine 126 coordinates a ubiquinone.

The protein belongs to the cytochrome b family. In terms of assembly, the cytochrome bc1 complex contains 3 respiratory subunits (MT-CYB, CYC1 and UQCRFS1), 2 core proteins (UQCRC1 and UQCRC2) and probably 6 low-molecular weight proteins. Requires heme b as cofactor.

It localises to the mitochondrion inner membrane. Its function is as follows. Component of the ubiquinol-cytochrome c reductase complex (complex III or cytochrome b-c1 complex) that is part of the mitochondrial respiratory chain. The b-c1 complex mediates electron transfer from ubiquinol to cytochrome c. Contributes to the generation of a proton gradient across the mitochondrial membrane that is then used for ATP synthesis. This chain is Cytochrome b (MT-CYB), found in Crotalus viridis viridis (Prairie rattlesnake).